We begin with the raw amino-acid sequence, 429 residues long: Formate-dependent phosphoribosylglycinamide formyltransferase (429 aa).

Residues 26-27 (EL) and Glu-86 contribute to the N(1)-(5-phospho-beta-D-ribosyl)glycinamide site. ATP is bound by residues Arg-118, Lys-159, 199–202 (EEHI), and Glu-207. Positions 123-319 (ETLVKEAKVP…EFGLHLRAVL (197 aa)) constitute an ATP-grasp domain. Residues Glu-276 and Glu-288 each coordinate Mg(2+). N(1)-(5-phospho-beta-D-ribosyl)glycinamide is bound by residues Asp-295, Lys-375, and 382-383 (RR).

Belongs to the PurK/PurT family. Homodimer.

The catalysed reaction is N(1)-(5-phospho-beta-D-ribosyl)glycinamide + formate + ATP = N(2)-formyl-N(1)-(5-phospho-beta-D-ribosyl)glycinamide + ADP + phosphate + H(+). It participates in purine metabolism; IMP biosynthesis via de novo pathway; N(2)-formyl-N(1)-(5-phospho-D-ribosyl)glycinamide from N(1)-(5-phospho-D-ribosyl)glycinamide (formate route): step 1/1. Its function is as follows. Involved in the de novo purine biosynthesis. Catalyzes the transfer of formate to 5-phospho-ribosyl-glycinamide (GAR), producing 5-phospho-ribosyl-N-formylglycinamide (FGAR). Formate is provided by PurU via hydrolysis of 10-formyl-tetrahydrofolate. The sequence is that of Formate-dependent phosphoribosylglycinamide formyltransferase from Pyrococcus furiosus (strain ATCC 43587 / DSM 3638 / JCM 8422 / Vc1).